A 218-amino-acid chain; its full sequence is Octanoyltransferase (218 aa).

The region spanning Ala-31–Glu-207 is the BPL/LPL catalytic domain. Substrate-binding positions include Arg-70–His-77, Ser-137–Gly-139, and Gly-150–Ala-152. Catalysis depends on Cys-168, which acts as the Acyl-thioester intermediate.

The protein belongs to the LipB family.

It is found in the cytoplasm. It catalyses the reaction octanoyl-[ACP] + L-lysyl-[protein] = N(6)-octanoyl-L-lysyl-[protein] + holo-[ACP] + H(+). Its pathway is protein modification; protein lipoylation via endogenous pathway; protein N(6)-(lipoyl)lysine from octanoyl-[acyl-carrier-protein]: step 1/2. Catalyzes the transfer of endogenously produced octanoic acid from octanoyl-acyl-carrier-protein onto the lipoyl domains of lipoate-dependent enzymes. Lipoyl-ACP can also act as a substrate although octanoyl-ACP is likely to be the physiological substrate. The chain is Octanoyltransferase from Azotobacter vinelandii (strain DJ / ATCC BAA-1303).